A 269-amino-acid polypeptide reads, in one-letter code: Diaminopimelate epimerase (269 aa).

Residues N13, Q47, and N65 each coordinate substrate. C74 (proton donor) is an active-site residue. Substrate is bound by residues 75 to 76, N149, N182, and 200 to 201; these read GN and ER. Residue C209 is the Proton acceptor of the active site. Position 210 to 211 (210 to 211) interacts with substrate; that stretch reads GT.

Belongs to the diaminopimelate epimerase family. In terms of assembly, homodimer.

Its subcellular location is the cytoplasm. The catalysed reaction is (2S,6S)-2,6-diaminopimelate = meso-2,6-diaminopimelate. It participates in amino-acid biosynthesis; L-lysine biosynthesis via DAP pathway; DL-2,6-diaminopimelate from LL-2,6-diaminopimelate: step 1/1. Catalyzes the stereoinversion of LL-2,6-diaminopimelate (L,L-DAP) to meso-diaminopimelate (meso-DAP), a precursor of L-lysine and an essential component of the bacterial peptidoglycan. The polypeptide is Diaminopimelate epimerase (Erythrobacter litoralis (strain HTCC2594)).